The following is a 296-amino-acid chain: NAD kinase (296 aa).

The active-site Proton acceptor is Asp-72. NAD(+) is bound by residues Asp-72–Gly-73, Asn-146–Asp-147, Arg-157, Lys-174, Asp-176, Thr-187–Ser-192, and Gln-247.

The protein belongs to the NAD kinase family. The cofactor is a divalent metal cation.

It localises to the cytoplasm. It carries out the reaction NAD(+) + ATP = ADP + NADP(+) + H(+). Functionally, involved in the regulation of the intracellular balance of NAD and NADP, and is a key enzyme in the biosynthesis of NADP. Catalyzes specifically the phosphorylation on 2'-hydroxyl of the adenosine moiety of NAD to yield NADP. In Pseudomonas syringae pv. tomato (strain ATCC BAA-871 / DC3000), this protein is NAD kinase.